We begin with the raw amino-acid sequence, 306 residues long: Porphobilinogen deaminase (306 aa).

Cysteine 239 carries the post-translational modification S-(dipyrrolylmethanemethyl)cysteine.

It belongs to the HMBS family. As to quaternary structure, monomer. Dipyrromethane serves as cofactor.

It carries out the reaction 4 porphobilinogen + H2O = hydroxymethylbilane + 4 NH4(+). The protein operates within porphyrin-containing compound metabolism; protoporphyrin-IX biosynthesis; coproporphyrinogen-III from 5-aminolevulinate: step 2/4. Functionally, tetrapolymerization of the monopyrrole PBG into the hydroxymethylbilane pre-uroporphyrinogen in several discrete steps. This is Porphobilinogen deaminase (hemC) from Helicobacter pylori (strain J99 / ATCC 700824) (Campylobacter pylori J99).